Reading from the N-terminus, the 511-residue chain is Maturase K (511 aa).

Belongs to the intron maturase 2 family. MatK subfamily.

It localises to the plastid. The protein localises to the chloroplast. In terms of biological role, usually encoded in the trnK tRNA gene intron. Probably assists in splicing its own and other chloroplast group II introns. The sequence is that of Maturase K from Psathyrostachys juncea (Russian wildrye).